A 421-amino-acid chain; its full sequence is GTPase Obg (421 aa).

Positions 1 to 158 (MYFIDEAINE…FKIKTELKIL (158 aa)) constitute an Obg domain. The 166-residue stretch at 159 to 324 (ADVGLIGYPS…LKYKMLEMIK (166 aa)) folds into the OBG-type G domain. Residues 165–172 (GYPSVGKS), 190–194 (FTTLK), 211–214 (DLPG), 278–281 (NKMD), and 305–307 (SLL) each bind GTP. Ser172 and Thr192 together coordinate Mg(2+). The OCT domain maps to 342–421 (TLEEEKPDFV…ICDRVFEFIT (80 aa)).

It belongs to the TRAFAC class OBG-HflX-like GTPase superfamily. OBG GTPase family. In terms of assembly, monomer. It depends on Mg(2+) as a cofactor.

Its subcellular location is the cytoplasm. In terms of biological role, an essential GTPase which binds GTP, GDP and possibly (p)ppGpp with moderate affinity, with high nucleotide exchange rates and a fairly low GTP hydrolysis rate. Plays a role in control of the cell cycle, stress response, ribosome biogenesis and in those bacteria that undergo differentiation, in morphogenesis control. The sequence is that of GTPase Obg from Phytoplasma mali (strain AT).